The primary structure comprises 359 residues: 4-hydroxy-3-methylbut-2-en-1-yl diphosphate synthase (flavodoxin) (359 aa).

Positions 264, 267, 299, and 306 each coordinate [4Fe-4S] cluster.

Belongs to the IspG family. Requires [4Fe-4S] cluster as cofactor.

The catalysed reaction is (2E)-4-hydroxy-3-methylbut-2-enyl diphosphate + oxidized [flavodoxin] + H2O + 2 H(+) = 2-C-methyl-D-erythritol 2,4-cyclic diphosphate + reduced [flavodoxin]. The protein operates within isoprenoid biosynthesis; isopentenyl diphosphate biosynthesis via DXP pathway; isopentenyl diphosphate from 1-deoxy-D-xylulose 5-phosphate: step 5/6. Converts 2C-methyl-D-erythritol 2,4-cyclodiphosphate (ME-2,4cPP) into 1-hydroxy-2-methyl-2-(E)-butenyl 4-diphosphate. This chain is 4-hydroxy-3-methylbut-2-en-1-yl diphosphate synthase (flavodoxin), found in Helicobacter pylori (strain J99 / ATCC 700824) (Campylobacter pylori J99).